A 477-amino-acid chain; its full sequence is GTPase Der (477 aa).

EngA-type G domains lie at 3–167 (LTIA…GKER) and 206–382 (LRIA…RMWN). Residues 9 to 16 (GRPNVGKS), 56 to 60 (DTAGL), 119 to 122 (NKSE), 212 to 219 (GRPNTGKS), 259 to 263 (DTAGL), and 324 to 327 (NKWD) each bind GTP. The 85-residue stretch at 383 to 467 (RRISTAKLNR…PIRISLRASD (85 aa)) folds into the KH-like domain.

This sequence belongs to the TRAFAC class TrmE-Era-EngA-EngB-Septin-like GTPase superfamily. EngA (Der) GTPase family. Associates with the 50S ribosomal subunit.

Its function is as follows. GTPase that plays an essential role in the late steps of ribosome biogenesis. This is GTPase Der from Bartonella quintana (strain Toulouse) (Rochalimaea quintana).